The chain runs to 3767 residues: Transmembrane cell adhesion receptor mua-3 (3767 aa).

The first 24 residues, 1–24 (MQAGISIFFLFLHIPIFFVNCSNS), serve as a signal peptide directing secretion. The Extracellular segment spans residues 25-3417 (TSCVAREEFQ…CQVAPSNASL (3393 aa)). Residues 26 to 63 (SCVAREEFQCKMDDSCISMKKWQDGVDDCYDGSDEVCL) form the LDL-receptor class A 1 domain. 10 cysteine pairs are disulfide-bonded: Cys27–Cys41, Cys35–Cys54, Cys62–Cys76, Cys69–Cys89, Cys97–Cys110, Cys104–Cys123, Cys131–Cys144, Cys138–Cys157, Cys165–Cys179, and Cys172–Cys192. LDL-receptor class A domains follow at residues 96-132 (GCPAHYFVCRDRSACIEPSKYLNGVADCKDKSDEPCA), 133-166 (QNQFQCSDGTKCIPKAQFQDGKEDCDDGSDEECT), and 167-209 (TSQF…ANCT). N-linked (GlcNAc...) asparagine glycans are attached at residues Asn201 and Asn207. EGF-like domains are found at residues 225 to 268 (KLKF…DKCI), 375 to 416 (NRDD…GTCR), 418 to 466 (LIDE…RKCR), 468 to 517 (LINE…RNCT), 519 to 566 (AINE…RKCV), 614 to 663 (RANP…RKCV), 665 to 713 (AVDE…RSCK), 714 to 760 (KADM…RVCR), 762 to 810 (VVNE…KNCV), 816 to 860 (DPPE…GRCV), 861 to 908 (VINE…RICR), 910 to 961 (RVNE…RRCI), 963 to 1012 (AVNE…RICT), 1029 to 1070 (TDDG…GSCR), 1071 to 1118 (VYSA…RICK), 1120 to 1168 (LINE…RQCT), and 1170 to 1219 (SNNE…RVCT). Cystine bridges form between Cys229–Cys243, Cys235–Cys252, Cys254–Cys267, Cys381–Cys392, Cys386–Cys402, Cys404–Cys415, Cys422–Cys435, Cys429–Cys444, Cys446–Cys465, Cys472–Cys486, Cys480–Cys495, Cys497–Cys516, Cys523–Cys536, Cys530–Cys545, Cys547–Cys565, Cys618–Cys632, Cys626–Cys642, Cys644–Cys662, Cys669–Cys682, Cys676–Cys691, Cys693–Cys712, Cys718–Cys729, Cys723–Cys738, Cys740–Cys759, Cys766–Cys779, Cys773–Cys788, Cys790–Cys809, Cys820–Cys836, Cys828–Cys845, Cys847–Cys859, Cys865–Cys879, Cys873–Cys888, Cys890–Cys907, Cys914–Cys930, Cys924–Cys939, Cys941–Cys960, Cys967–Cys981, Cys975–Cys990, Cys992–Cys1011, Cys1033–Cys1046, Cys1040–Cys1055, Cys1057–Cys1069, Cys1075–Cys1087, Cys1081–Cys1096, Cys1098–Cys1117, Cys1124–Cys1137, Cys1131–Cys1146, Cys1148–Cys1167, Cys1174–Cys1188, Cys1182–Cys1197, and Cys1199–Cys1218. A glycan (N-linked (GlcNAc...) asparagine) is linked at Asn383. N-linked (GlcNAc...) asparagine glycosylation occurs at Asn515. One can recognise a VWFA domain in the interval 1230-1406 (DLVFLIDGSG…DLDTRLRSMI (177 aa)). N-linked (GlcNAc...) asparagine glycosylation occurs at Asn1350. EGF-like domains follow at residues 1421 to 1466 (SEDV…RVCG), 1466 to 1510 (GGDL…GFCV), 1521 to 1562 (HDAN…GQCA), 1563 to 1608 (YPGS…DICL), 1608 to 1656 (LKNE…RVCV), 1658 to 1706 (LQNE…MVCK), 1708 to 1755 (LVNE…RRCE), 1759 to 1807 (TNDK…RLCI), 1809 to 1860 (VIPE…RLCK), 1862 to 1911 (LQNE…RKCK), 1913 to 1961 (LINE…RRCL), 1963 to 2011 (RINE…RICR), 2014 to 2062 (LVDE…RLCQ), 2068 to 2112 (PPPE…GSCS), 2113 to 2160 (IINE…RMCK), 2162 to 2208 (MVNE…RICK), 2210 to 2258 (LTNE…RACR), 2260 to 2308 (LVNE…RVCL), 2310 to 2358 (FINE…RVCV), 2360 to 2408 (LVDE…RVCS), 2409 to 2455 (APEV…RVCV), 2456 to 2504 (RNNA…RVCE), 2513 to 2563 (PRHP…RLCV), 2565 to 2616 (TEPV…RICK), 2618 to 2666 (LINE…RICS), 2668 to 2714 (SVNE…HRCS), 2716 to 2763 (MINE…RICR), 2763 to 2811 (RLNE…RICI), and 2833 to 2872 (REFPCGRDDCIKARGEVCISGEYCGCKPGEGRSASTGKCQ). Cystine bridges form between Cys1425–Cys1441, Cys1433–Cys1450, Cys1452–Cys1465, Cys1470–Cys1484, Cys1478–Cys1494, Cys1496–Cys1509, Cys1525–Cys1538, Cys1532–Cys1547, Cys1549–Cys1561, Cys1567–Cys1583, Cys1575–Cys1592, Cys1594–Cys1607, Cys1612–Cys1625, Cys1619–Cys1634, Cys1636–Cys1655, Cys1662–Cys1675, Cys1669–Cys1684, Cys1686–Cys1705, Cys1712–Cys1726, Cys1720–Cys1735, Cys1737–Cys1754, Cys1763–Cys1776, Cys1770–Cys1786, Cys1788–Cys1806, Cys1813–Cys1829, Cys1821–Cys1838, Cys1840–Cys1859, Cys1866–Cys1880, Cys1873–Cys1889, Cys1891–Cys1910, Cys1917–Cys1930, Cys1924–Cys1939, Cys1941–Cys1960, Cys1967–Cys1980, Cys1974–Cys1989, Cys1991–Cys2010, Cys2018–Cys2031, Cys2025–Cys2040, Cys2042–Cys2061, Cys2072–Cys2088, Cys2080–Cys2097, Cys2099–Cys2111, Cys2117–Cys2131, Cys2125–Cys2140, Cys2142–Cys2159, Cys2166–Cys2180, Cys2174–Cys2189, Cys2191–Cys2207, Cys2214–Cys2228, Cys2222–Cys2237, Cys2239–Cys2257, Cys2264–Cys2278, Cys2272–Cys2287, Cys2289–Cys2307, Cys2314–Cys2327, Cys2321–Cys2336, Cys2338–Cys2357, Cys2364–Cys2377, Cys2371–Cys2386, Cys2388–Cys2407, Cys2413–Cys2425, Cys2419–Cys2435, Cys2437–Cys2454, Cys2460–Cys2474, Cys2468–Cys2483, and Cys2485–Cys2503. The tract at residues 2492–2521 (RSPDSSQRGRVCEPPPPPSPPPRHPCQDPE) is disordered. Over residues 2504 to 2515 (EPPPPPSPPPRH) the composition is skewed to pro residues. Disulfide bonds link Cys2517–Cys2531, Cys2525–Cys2541, Cys2543–Cys2562, Cys2569–Cys2583, Cys2577–Cys2594, Cys2596–Cys2615, Cys2622–Cys2636, Cys2630–Cys2645, Cys2647–Cys2665, Cys2672–Cys2686, Cys2680–Cys2695, Cys2697–Cys2713, Cys2720–Cys2734, Cys2728–Cys2743, Cys2745–Cys2762, Cys2767–Cys2781, Cys2775–Cys2790, Cys2792–Cys2810, Cys2837–Cys2850, Cys2842–Cys2856, and Cys2858–Cys2871. One can recognise an SEA 1 domain in the interval 2873–2999 (EVQETPFELR…GSLRVASDTD (127 aa)). Asn2944 carries an N-linked (GlcNAc...) asparagine glycan. Residues 3009-3048 (EWGNCGGMSCKEHLKEVCIAGHICGCPDGMKRRDANSECR) form the EGF-like 47 domain. Disulfide bonds link Cys3013/Cys3026, Cys3018/Cys3032, and Cys3034/Cys3047. The 126-residue stretch at 3049–3174 (VVESWNVPLW…SELYLNPTQP (126 aa)) folds into the SEA 2 domain. 2 N-linked (GlcNAc...) asparagine glycosylation sites follow: Asn3120 and Asn3130. 3 consecutive EGF-like domains span residues 3176-3220 (PFNP…KKCL), 3224-3272 (GFNE…SLCV), and 3272-3324 (VLDY…TLCM). Intrachain disulfides connect Cys3180–Cys3191, Cys3185–Cys3201, Cys3203–Cys3219, Cys3228–Cys3242, Cys3236–Cys3251, Cys3253–Cys3271, Cys3276–Cys3288, Cys3282–Cys3297, Cys3299–Cys3323, Cys3332–Cys3345, Cys3339–Cys3354, Cys3356–Cys3372, Cys3377–Cys3386, Cys3380–Cys3397, and Cys3399–Cys3408. N-linked (GlcNAc...) asparagine glycosylation occurs at Asn3285. The region spanning 3328–3373 (DVDECALGLNNCSGVAHCIDRAVGYTCKCPDGYIDGNPDEPGRVCG) is the EGF-like 51; calcium-binding domain. Residue Asn3337 is glycosylated (N-linked (GlcNAc...) asparagine; atypical). The N-linked (GlcNAc...) asparagine glycan is linked to Asn3338. The region spanning 3373-3409 (GALLCDLCNAHGDCVHNTATNNITCVCTDGWTGPQCQ) is the EGF-like 52 domain. Asn3394 carries an N-linked (GlcNAc...) asparagine glycan. Residue Asn3414 is glycosylated (N-linked (GlcNAc...) asparagine). A helical membrane pass occupies residues 3418-3438 (VLLILLALLFLLLTLCCLLYF). Over 3439-3767 (CTKCHCFKGR…SQTSTHVTKK (329 aa)) the chain is Cytoplasmic. Residues 3582–3729 (TTTTDEQGNT…EEDVEHSVGD (148 aa)) form a disordered region. Residues 3588–3597 (QGNTIVTTTE) are compositionally biased toward polar residues. Over residues 3630-3665 (QSQSQQQQSMSQGMSQSMSQHATSAGYSSSGMESSA) the composition is skewed to low complexity. The segment covering 3675–3684 (HTGERERGGS) has biased composition (basic and acidic residues). Positions 3690–3702 (IGRARGMAAASSG) are enriched in low complexity.

Expressed in the hypodermis at the sites of muscle contact, in striated muscles including body wall muscles, the anal sphincter muscles and the junctions between the anal sphincter muscle and rectal cuticle. Also expressed in non-muscle cells including the excretory duct cell and pore cells.

It localises to the cell membrane. The protein resides in the cell junction. Its subcellular location is the hemidesmosome. Functionally, involved in cell adhesion and required for organ positioning and attachment. At the hypodermal surface, required for attachment of the hypdermermis to the basal cuticle in postembryonic development, possibly through intermediate filaments of the cytoskeleton. The polypeptide is Transmembrane cell adhesion receptor mua-3 (Caenorhabditis elegans).